The chain runs to 324 residues: Mevalonate kinase (324 aa).

103 to 113 (PPRAGLGSSAA) provides a ligand contact to ATP. The active-site Proton acceptor is the Asp-154.

It belongs to the GHMP kinase family. Mevalonate kinase subfamily. As to quaternary structure, homodimer. It depends on Mg(2+) as a cofactor.

It is found in the cytoplasm. It catalyses the reaction (R)-mevalonate + ATP = (R)-5-phosphomevalonate + ADP + H(+). It participates in isoprenoid biosynthesis; isopentenyl diphosphate biosynthesis via mevalonate pathway; isopentenyl diphosphate from (R)-mevalonate: step 1/3. Its function is as follows. Catalyzes the phosphorylation of (R)-mevalonate (MVA) to (R)-mevalonate 5-phosphate (MVAP). Functions in the mevalonate (MVA) pathway leading to isopentenyl diphosphate (IPP), a key precursor for the biosynthesis of isoprenoid compounds such as archaeal membrane lipids. The sequence is that of Mevalonate kinase from Aeropyrum pernix (strain ATCC 700893 / DSM 11879 / JCM 9820 / NBRC 100138 / K1).